We begin with the raw amino-acid sequence, 319 residues long: uncharacterized protein (319 aa).

The signal sequence occupies residues 1-23 (MFPFRRNVLAFAALLALSSPVLA).

The protein to H.influenzae HI_0755.

This is an uncharacterized protein from Escherichia coli (strain K12).